Here is a 270-residue protein sequence, read N- to C-terminus: 4-diphosphocytidyl-2-C-methyl-D-erythritol kinase (270 aa).

Lys-8 is a catalytic residue. 90–100 (PIGAGLGGGSS) lines the ATP pocket. Asp-132 is a catalytic residue.

This sequence belongs to the GHMP kinase family. IspE subfamily.

The catalysed reaction is 4-CDP-2-C-methyl-D-erythritol + ATP = 4-CDP-2-C-methyl-D-erythritol 2-phosphate + ADP + H(+). Its pathway is isoprenoid biosynthesis; isopentenyl diphosphate biosynthesis via DXP pathway; isopentenyl diphosphate from 1-deoxy-D-xylulose 5-phosphate: step 3/6. Functionally, catalyzes the phosphorylation of the position 2 hydroxy group of 4-diphosphocytidyl-2C-methyl-D-erythritol. The chain is 4-diphosphocytidyl-2-C-methyl-D-erythritol kinase from Cytophaga hutchinsonii (strain ATCC 33406 / DSM 1761 / CIP 103989 / NBRC 15051 / NCIMB 9469 / D465).